The sequence spans 76 residues: Small ribosomal subunit protein uS17 (76 aa).

This sequence belongs to the universal ribosomal protein uS17 family. Part of the 30S ribosomal subunit.

Functionally, one of the primary rRNA binding proteins, it binds specifically to the 5'-end of 16S ribosomal RNA. The sequence is that of Small ribosomal subunit protein uS17 from Ruegeria pomeroyi (strain ATCC 700808 / DSM 15171 / DSS-3) (Silicibacter pomeroyi).